A 172-amino-acid chain; its full sequence is Lipoprotein signal peptidase (172 aa).

The next 3 helical transmembrane spans lie at 10 to 30 (LIWL…KAWV), 68 to 88 (WQLW…AFWL), and 98 to 118 (SALP…DRLM). Active-site residues include D124 and D142. A helical transmembrane segment spans residues 138-158 (FNIADSAIVGGAIGIAVFGLF).

This sequence belongs to the peptidase A8 family.

It is found in the cell inner membrane. It carries out the reaction Release of signal peptides from bacterial membrane prolipoproteins. Hydrolyzes -Xaa-Yaa-Zaa-|-(S,diacylglyceryl)Cys-, in which Xaa is hydrophobic (preferably Leu), and Yaa (Ala or Ser) and Zaa (Gly or Ala) have small, neutral side chains.. The protein operates within protein modification; lipoprotein biosynthesis (signal peptide cleavage). This protein specifically catalyzes the removal of signal peptides from prolipoproteins. The chain is Lipoprotein signal peptidase from Xanthomonas axonopodis pv. citri (strain 306).